A 122-amino-acid polypeptide reads, in one-letter code: Small ribosomal subunit protein uS13 (122 aa).

The interval 95 to 122 (GLPVRGQRTHTNARTRKGPAKPIAGKKK) is disordered.

This sequence belongs to the universal ribosomal protein uS13 family. As to quaternary structure, part of the 30S ribosomal subunit. Forms a loose heterodimer with protein S19. Forms two bridges to the 50S subunit in the 70S ribosome.

Located at the top of the head of the 30S subunit, it contacts several helices of the 16S rRNA. In the 70S ribosome it contacts the 23S rRNA (bridge B1a) and protein L5 of the 50S subunit (bridge B1b), connecting the 2 subunits; these bridges are implicated in subunit movement. Contacts the tRNAs in the A and P-sites. The polypeptide is Small ribosomal subunit protein uS13 (Rhodospirillum rubrum (strain ATCC 11170 / ATH 1.1.1 / DSM 467 / LMG 4362 / NCIMB 8255 / S1)).